The following is a 109-amino-acid chain: uncharacterized protein (109 aa).

A run of 3 helical transmembrane segments spans residues 16-36 (YIPLVVLLQMYIIYVEPYYGL), 54-74 (TVYFLVICHSIESAIAFLLCL), and 80-100 (FCSSMKWIVSTFIFGGPTLAM).

It is found in the membrane. This is an uncharacterized protein from Schizosaccharomyces pombe (strain 972 / ATCC 24843) (Fission yeast).